A 311-amino-acid chain; its full sequence is Methionyl-tRNA formyltransferase (311 aa).

(6S)-5,6,7,8-tetrahydrofolate is bound at residue 110–113 (SLLP).

Belongs to the Fmt family.

It catalyses the reaction L-methionyl-tRNA(fMet) + (6R)-10-formyltetrahydrofolate = N-formyl-L-methionyl-tRNA(fMet) + (6S)-5,6,7,8-tetrahydrofolate + H(+). In terms of biological role, attaches a formyl group to the free amino group of methionyl-tRNA(fMet). The formyl group appears to play a dual role in the initiator identity of N-formylmethionyl-tRNA by promoting its recognition by IF2 and preventing the misappropriation of this tRNA by the elongation apparatus. This chain is Methionyl-tRNA formyltransferase, found in Streptococcus pyogenes serotype M1.